The chain runs to 139 residues: Basic phospholipase A2 beta-bungarotoxin A2 chain (139 aa).

The N-terminal stretch at 1–9 (AVCVSLLGA) is a signal peptide. Residues 10–17 (ANIPPHPF) constitute a propeptide that is removed on maturation. Y45, G47, and G49 together coordinate Ca(2+). C46 and C62 are oxidised to a cystine. H65 is a catalytic residue. D66 serves as a coordination point for Ca(2+).

It belongs to the phospholipase A2 family. Group I subfamily. D49 sub-subfamily. As to quaternary structure, heterodimer; disulfide-linked. The A chains have phospholipase A2 activity and the B chains show homology with the basic protease inhibitors. The cofactor is Ca(2+). As to expression, expressed by the venom gland.

The protein resides in the secreted. The enzyme catalyses a 1,2-diacyl-sn-glycero-3-phosphocholine + H2O = a 1-acyl-sn-glycero-3-phosphocholine + a fatty acid + H(+). In terms of biological role, snake venom phospholipase A2 (PLA2) that shows presynaptic neurotoxicity. PLA2 catalyzes the calcium-dependent hydrolysis of the 2-acyl groups in 3-sn-phosphoglycerides. The polypeptide is Basic phospholipase A2 beta-bungarotoxin A2 chain (Bungarus candidus (Malayan krait)).